The following is a 111-amino-acid chain: MAVKIRLARGGAKKRPFYRVVVANATAPRDGDFLEKVGTYDPMLASDNSERVVLKKDRIEYWLGTGAKPTERVAKFIEQAGVTLPEKVKKEMEVKAKNRKARLSKKEAKEA.

Belongs to the bacterial ribosomal protein bS16 family.

In Rickettsia africae (strain ESF-5), this protein is Small ribosomal subunit protein bS16.